The chain runs to 173 residues: Ribosome maturation factor RimM (173 aa).

The 80-residue stretch at Glu78–Glu157 folds into the PRC barrel domain. The segment at Pro152–Pro173 is disordered.

The protein belongs to the RimM family. As to quaternary structure, binds ribosomal protein uS19.

It localises to the cytoplasm. An accessory protein needed during the final step in the assembly of 30S ribosomal subunit, possibly for assembly of the head region. Essential for efficient processing of 16S rRNA. May be needed both before and after RbfA during the maturation of 16S rRNA. It has affinity for free ribosomal 30S subunits but not for 70S ribosomes. The protein is Ribosome maturation factor RimM of Beijerinckia indica subsp. indica (strain ATCC 9039 / DSM 1715 / NCIMB 8712).